Here is a 619-residue protein sequence, read N- to C-terminus: Nuclear hormone receptor family member nhr-6 (619 aa).

The segment covering 1–18 (MEQLSIQTDELQDQFSNC) has biased composition (polar residues). Disordered stretches follow at residues 1 to 29 (MEQL…SYSS), 58 to 86 (MSKN…SKTT), 103 to 134 (QVNT…HRLP), and 196 to 232 (QHFP…PTSP). Positions 19-29 (SPASVDSSYSS) are enriched in low complexity. Over residues 125-134 (KPSSSSHRLP) the composition is skewed to polar residues. Low complexity predominate over residues 206–232 (GSQGTTSSSNNTGGTPSPHSSSLPTSP). A DNA-binding region (nuclear receptor) is located at residues 265–340 (DKMCAVCNDR…VGMVKEIVRH (76 aa)). 2 NR C4-type zinc fingers span residues 268–288 (CAVC…CEGC) and 304–328 (CAGN…YQKC). The tract at residues 345 to 365 (GRRGRLSSKTKLARSEDQPSP) is disordered. Residues 346–356 (RRGRLSSKTKL) are compositionally biased toward basic residues. Positions 365–600 (PPLPLLALMG…STDAPPACGS (236 aa)) constitute an NR LBD domain. The segment at 589–600 (LRSTDAPPACGS) is AF-2.

It belongs to the nuclear hormone receptor family. NR4 subfamily. As to expression, in hermaphrodites, expressed in the developing spermatheca and dorsal uterus. Expression includes the 8 cells of the dorsal somatic gonad primordium and the sujc cells that form the core of the spermatheca-uterine valve. Expressed in the precursor cells of the spermatheca-sheath lineages (SS cells) and in the precursors and descendents of the dorsal-uterine lineage (DU cells). In both hermaphroditic and male animals, expressed in a pair of head chemosensory neurons.

Its subcellular location is the nucleus. Functionally, transcriptional activator that induces gene expression by binding to the NGFI-B response element (NBRE) 5'-AAAGGTCA-3'. Required for proper morphogenesis of the spermatheca and the spermatheca-uterine valve formation. Promotes cell proliferation and differentiation of the spermatheca precursor cells during spermatheca development in larval stage L4. Might play a role in promoting G1/S phase progression in the spermatheca precursor cell lineage. Also required for the differentiation of the spermatheca-uterine junction core (sujc) cells which are generating the spermatheca-uterine valve. The sequence is that of Nuclear hormone receptor family member nhr-6 (nhr-6) from Caenorhabditis elegans.